We begin with the raw amino-acid sequence, 558 residues long: MHCFPCFSSPKNKKSSTTNETNDNNEPKPDDRRRAEETEEIEQSEGTSLKIFTFRELATATKNFRQECLLGEGGFGRVYKGTLKSTGQVVAVKQLDKHGLHGNKEFQAEVLSLGQLDHPNLVKLIGYCADGDQRLLVYDYISGGSLQDHLHEPKADSDPMDWTTRMQIAYAAAQGLDYLHDKANPPVIYRDLKASNILLDDDFSPKLSDFGLHKLGPGTGDKMMALSSRVMGTYGYSAPEYTRGGNLTLKSDVYSFGVVLLELITGRRALDTTRPNDEQNLVSWAQPIFRDPKRYPDMADPVLENKFSERGLNQAVAIASMCVQEEASARPLISDVMVALSFLSMPTEDGIPTTVPILSFKDKSMSIALSRHDSNLVSPPPELATEDDKSSTSSGEESSLESEKESVSKNEYKKKHEEEDSSMESDDESDSNSEHEKDQPPKPIDEKNQAQSLKIKYRYSWEDIDVNDERLSSKSSQKSNDESTSSRYDSDRDQDEKGKEEEEEEEAEEKHTHIEHIDSSKTDDDQSVYFDNDDDSGDDNGGSLHRIKSDVAIDSIKE.

The interval Met-1–Glu-45 is disordered. A compositionally biased stretch (low complexity) spans Ser-15–Asn-24. Over residues Asn-25–Glu-36 the composition is skewed to basic and acidic residues. Thr-53 bears the Phosphothreonine mark. Positions Phe-64–Leu-343 constitute a Protein kinase domain. ATP is bound by residues Leu-70–Val-78 and Lys-93. Residue Tyr-138 is modified to Phosphotyrosine. The Proton acceptor role is filled by Asp-191. Phosphoserine occurs at positions 195 and 227. Phosphothreonine is present on Thr-233. Residue Tyr-241 is modified to Phosphotyrosine. The disordered stretch occupies residues His-372–Glu-558. Basic and acidic residues predominate over residues Glu-401–Glu-418. Acidic residues predominate over residues Glu-419–Ser-431. Positions Asn-432–Asn-448 are enriched in basic and acidic residues. A compositionally biased stretch (low complexity) spans Ser-473 to Ser-486. Basic and acidic residues-rich tracts occupy residues Tyr-488 to Glu-500, Glu-508 to Asp-524, and Ile-547 to Glu-558.

Belongs to the protein kinase superfamily. Ser/Thr protein kinase family. As to quaternary structure, interacts with PRK6. Palmitoylated. Expressed in mature pollen and in germinating pollen tubes.

Its subcellular location is the cell membrane. Functionally, involved in pollen tube guidance into micropyle. Participates in perception of the ovule-secreted peptide signal LURE1. The sequence is that of Receptor-like kinase LIP2 from Arabidopsis thaliana (Mouse-ear cress).